Consider the following 329-residue polypeptide: DNA-directed RNA polymerase subunit alpha (329 aa).

Residues 1-235 (MQNSIIGFLK…EQLEAFVDLR (235 aa)) form an alpha N-terminal domain (alpha-NTD) region. Residues 249–329 (FEPILLRPVD…KWPPSSILEE (81 aa)) are alpha C-terminal domain (alpha-CTD).

Belongs to the RNA polymerase alpha chain family. In terms of assembly, homodimer. The RNAP catalytic core consists of 2 alpha, 1 beta, 1 beta' and 1 omega subunit. When a sigma factor is associated with the core the holoenzyme is formed, which can initiate transcription.

It carries out the reaction RNA(n) + a ribonucleoside 5'-triphosphate = RNA(n+1) + diphosphate. DNA-dependent RNA polymerase catalyzes the transcription of DNA into RNA using the four ribonucleoside triphosphates as substrates. The chain is DNA-directed RNA polymerase subunit alpha from Buchnera aphidicola subsp. Schizaphis graminum (strain Sg).